The following is a 346-amino-acid chain: Phosphoribosylformylglycinamidine cyclo-ligase (346 aa).

It belongs to the AIR synthase family.

It is found in the cytoplasm. The enzyme catalyses 2-formamido-N(1)-(5-O-phospho-beta-D-ribosyl)acetamidine + ATP = 5-amino-1-(5-phospho-beta-D-ribosyl)imidazole + ADP + phosphate + H(+). The protein operates within purine metabolism; IMP biosynthesis via de novo pathway; 5-amino-1-(5-phospho-D-ribosyl)imidazole from N(2)-formyl-N(1)-(5-phospho-D-ribosyl)glycinamide: step 2/2. This chain is Phosphoribosylformylglycinamidine cyclo-ligase, found in Bacillus velezensis (strain DSM 23117 / BGSC 10A6 / LMG 26770 / FZB42) (Bacillus amyloliquefaciens subsp. plantarum).